A 400-amino-acid polypeptide reads, in one-letter code: CCA-adding enzyme (400 aa).

Glycine 28 and arginine 31 together coordinate ATP. CTP is bound by residues glycine 28 and arginine 31. Mg(2+) is bound by residues aspartate 41 and aspartate 43. 5 residues coordinate ATP: arginine 112, aspartate 155, arginine 158, arginine 161, and arginine 164. 5 residues coordinate CTP: arginine 112, aspartate 155, arginine 158, arginine 161, and arginine 164.

The protein belongs to the tRNA nucleotidyltransferase/poly(A) polymerase family. Bacterial CCA-adding enzyme type 3 subfamily. In terms of assembly, homodimer. Mg(2+) is required as a cofactor.

The enzyme catalyses a tRNA precursor + 2 CTP + ATP = a tRNA with a 3' CCA end + 3 diphosphate. The catalysed reaction is a tRNA with a 3' CCA end + 2 CTP + ATP = a tRNA with a 3' CCACCA end + 3 diphosphate. Its function is as follows. Catalyzes the addition and repair of the essential 3'-terminal CCA sequence in tRNAs without using a nucleic acid template. Adds these three nucleotides in the order of C, C, and A to the tRNA nucleotide-73, using CTP and ATP as substrates and producing inorganic pyrophosphate. tRNA 3'-terminal CCA addition is required both for tRNA processing and repair. Also involved in tRNA surveillance by mediating tandem CCA addition to generate a CCACCA at the 3' terminus of unstable tRNAs. While stable tRNAs receive only 3'-terminal CCA, unstable tRNAs are marked with CCACCA and rapidly degraded. The polypeptide is CCA-adding enzyme (Staphylococcus aureus (strain COL)).